Consider the following 127-residue polypeptide: Small ribosomal subunit protein uS11 (127 aa).

Belongs to the universal ribosomal protein uS11 family. In terms of assembly, part of the 30S ribosomal subunit. Interacts with proteins S7 and S18. Binds to IF-3.

In terms of biological role, located on the platform of the 30S subunit, it bridges several disparate RNA helices of the 16S rRNA. Forms part of the Shine-Dalgarno cleft in the 70S ribosome. This is Small ribosomal subunit protein uS11 from Anaeromyxobacter dehalogenans (strain 2CP-C).